Reading from the N-terminus, the 297-residue chain is Alpha-tubulin N-acetyltransferase 1 (297 aa).

The N-acetyltransferase domain occupies 1 to 184 (MDFPYDLNAL…NNFVVFAGFF (184 aa)). Acetyl-CoA is bound by residues 118–131 (FYVT…GYGS) and 154–163 (SPKFLSFLEK). The tract at residues 226–297 (FVRPGGPPHS…SLNRSRLSFH (72 aa)) is disordered. Positions 230-240 (GGPPHSPPLLP) are enriched in pro residues. The span at 241–264 (SSPQSRSLSVGSSPSRAPLRPAAA) shows a compositional bias: low complexity. Composition is skewed to polar residues over residues 266 to 278 (VLQQ…SPLN) and 286 to 297 (TSSLNRSRLSFH).

The protein belongs to the acetyltransferase ATAT1 family. As to quaternary structure, monomer.

The protein resides in the cytoplasm. The protein localises to the membrane. It localises to the clathrin-coated pit. It is found in the cell junction. Its subcellular location is the focal adhesion. The protein resides in the cell projection. The protein localises to the axon. It localises to the cytoskeleton. It is found in the spindle. The enzyme catalyses L-lysyl-[alpha-tubulin] + acetyl-CoA = N(6)-acetyl-L-lysyl-[alpha-tubulin] + CoA + H(+). Specifically acetylates 'Lys-40' in alpha-tubulin on the lumenal side of microtubules. Promotes microtubule destabilization and accelerates microtubule dynamics; this activity may be independent of acetylation activity. Acetylates alpha-tubulin with a slow enzymatic rate, due to a catalytic site that is not optimized for acetyl transfer. Enters the microtubule through each end and diffuses quickly throughout the lumen of microtubules. Acetylates only long/old microtubules because of its slow acetylation rate since it does not have time to act on dynamically unstable microtubules before the enzyme is released. May be involved in neuron development. Acetylates alpha-tubulin in neurons, but not in cilia. This is Alpha-tubulin N-acetyltransferase 1 from Danio rerio (Zebrafish).